Reading from the N-terminus, the 322-residue chain is Probable 2-oxoglutarate-dependent dioxygenase AOP1 (322 aa).

Positions 165–271 (TYYLTRLMKY…RYSTGLFSIP (107 aa)) constitute a Fe2OG dioxygenase domain. The Fe cation site is built by His195, Asp197, and His252. Arg262 is a binding site for 2-oxoglutarate.

It belongs to the iron/ascorbate-dependent oxidoreductase family. It depends on Fe(2+) as a cofactor.

Probable 2-oxoglutarate-dependent dioxygenase that may be involved in glucosinolates biosynthesis. May play a role in the production of aliphatic glucosinolates. This is Probable 2-oxoglutarate-dependent dioxygenase AOP1 (AOP1) from Arabidopsis thaliana (Mouse-ear cress).